Consider the following 158-residue polypeptide: UPF0262 protein Rsph17029_2283 (158 aa).

This sequence belongs to the UPF0262 family.

This chain is UPF0262 protein Rsph17029_2283, found in Cereibacter sphaeroides (strain ATCC 17029 / ATH 2.4.9) (Rhodobacter sphaeroides).